The chain runs to 279 residues: Acyl-[acyl-carrier-protein]--UDP-N-acetylglucosamine O-acyltransferase (279 aa).

The protein belongs to the transferase hexapeptide repeat family. LpxA subfamily. As to quaternary structure, homotrimer.

Its subcellular location is the cytoplasm. The catalysed reaction is a (3R)-hydroxyacyl-[ACP] + UDP-N-acetyl-alpha-D-glucosamine = a UDP-3-O-[(3R)-3-hydroxyacyl]-N-acetyl-alpha-D-glucosamine + holo-[ACP]. It functions in the pathway glycolipid biosynthesis; lipid IV(A) biosynthesis; lipid IV(A) from (3R)-3-hydroxytetradecanoyl-[acyl-carrier-protein] and UDP-N-acetyl-alpha-D-glucosamine: step 1/6. In terms of biological role, involved in the biosynthesis of lipid A, a phosphorylated glycolipid that anchors the lipopolysaccharide to the outer membrane of the cell. This is Acyl-[acyl-carrier-protein]--UDP-N-acetylglucosamine O-acyltransferase from Mesorhizobium japonicum (strain LMG 29417 / CECT 9101 / MAFF 303099) (Mesorhizobium loti (strain MAFF 303099)).